A 200-amino-acid polypeptide reads, in one-letter code: ATP-dependent Clp protease proteolytic subunit 1 (200 aa).

The active-site Nucleophile is the Ser-102. The active site involves His-127.

It belongs to the peptidase S14 family. In terms of assembly, fourteen ClpP subunits assemble into 2 heptameric rings which stack back to back to give a disk-like structure with a central cavity, resembling the structure of eukaryotic proteasomes.

The protein localises to the cytoplasm. It carries out the reaction Hydrolysis of proteins to small peptides in the presence of ATP and magnesium. alpha-casein is the usual test substrate. In the absence of ATP, only oligopeptides shorter than five residues are hydrolyzed (such as succinyl-Leu-Tyr-|-NHMec, and Leu-Tyr-Leu-|-Tyr-Trp, in which cleavage of the -Tyr-|-Leu- and -Tyr-|-Trp bonds also occurs).. Its function is as follows. Cleaves peptides in various proteins in a process that requires ATP hydrolysis. Has a chymotrypsin-like activity. Plays a major role in the degradation of misfolded proteins. The sequence is that of ATP-dependent Clp protease proteolytic subunit 1 from Bradyrhizobium diazoefficiens (strain JCM 10833 / BCRC 13528 / IAM 13628 / NBRC 14792 / USDA 110).